The following is a 643-amino-acid chain: Ecto-NOX disulfide-thiol exchanger 1 (643 aa).

Positions 142-221 (KTVFVGGLPE…GRLHVDFAQA (80 aa)) constitute an RRM domain. Coiled-coil stretches lie at residues 307–342 (VQSA…LTGI) and 425–521 (QAYA…QLKG).

It belongs to the ENOX family. Cu cation serves as cofactor.

It localises to the cell membrane. It is found in the secreted. Its subcellular location is the extracellular space. With respect to regulation, not inhibited by the antitumor sulfonylurea LY181984, the vabilloid capsaicin, and retinoids. Its function is as follows. Probably acts as a terminal oxidase of plasma electron transport from cytosolic NAD(P)H via hydroquinones to acceptors at the cell surface. Hydroquinone oxidase activity alternates with a protein disulfide-thiol interchange/oxidoreductase activity which may control physical membrane displacements associated with vesicle budding or cell enlargement. The activities oscillate with a period length of 24 minutes and play a role in control of the ultradian cellular biological clock. The sequence is that of Ecto-NOX disulfide-thiol exchanger 1 (Enox1) from Mus musculus (Mouse).